Reading from the N-terminus, the 115-residue chain is Large ribosomal subunit protein bL20 (115 aa).

It belongs to the bacterial ribosomal protein bL20 family.

In terms of biological role, binds directly to 23S ribosomal RNA and is necessary for the in vitro assembly process of the 50S ribosomal subunit. It is not involved in the protein synthesizing functions of that subunit. The polypeptide is Large ribosomal subunit protein bL20 (Prochlorococcus marinus (strain MIT 9215)).